An 87-amino-acid polypeptide reads, in one-letter code: UPF0297 protein Sca_1229 (87 aa).

This sequence belongs to the UPF0297 family.

This chain is UPF0297 protein Sca_1229, found in Staphylococcus carnosus (strain TM300).